An 874-amino-acid chain; its full sequence is Breast cancer anti-estrogen resistance protein 1 (874 aa).

Position 1 is an N-acetylmethionine (Met1). The SH3 domain occupies 3–65 (VPNVLAKALY…PGNRLKILVG (63 aa)). A disordered region spans residues 71–177 (PVGPGPGPPA…LYQVPPGPGS (107 aa)). Over residues 73–88 (GPGPGPPATPPQPQPS) the composition is skewed to pro residues. Residues 119–420 (YLVPTPSKTQ…DGVYAVPPPA (302 aa)) form a substrate for kinases region. Tyr132 is modified (phosphotyrosine). Over residues 139–155 (PQFQSPPAKQTSTFSKQ) the composition is skewed to polar residues. At Ser143 the chain carries Phosphoserine. A phosphotyrosine mark is found at Tyr238 and Tyr253. Thr273 bears the Phosphothreonine mark. Residue Ser296 is modified to Phosphoserine. Tyr366, Tyr376, and Tyr414 each carry phosphotyrosine. Low complexity predominate over residues 374-388 (DLYDVPPGLRRPGPG). Disordered stretches follow at residues 374-394 (DLYDVPPGLRRPGPGTLYDVP), 409-450 (VDDG…SLEV), and 610-662 (RRTK…NSEG). The segment covering 420–430 (AEREAPTDGKR) has biased composition (basic and acidic residues). A compositionally biased stretch (low complexity) spans 431–448 (LSASSTGSTRSSQSASSL). Phosphoserine occurs at positions 432, 441, and 643. The span at 621–659 (GSSSLHPNPTDKASSIQSRPLPSPPKFTSQDSPDGQYEN) shows a compositional bias: polar residues. The SH3-binding motif lies at 639–647 (RPLPSPPKF). The interval 750-800 (FYLEQCEANLTTLTDAVDAFFTAVATNQPPKIFVAHSKFVILSAHKLVFIG) is divergent helix-loop-helix motif.

It belongs to the CAS family. In terms of assembly, forms complexes in vivo with PTK2/FAK1, adapter protein CRKL and LYN kinase. Can heterodimerize with NEDD9. Component of a complex comprised of SH2D3C, BCAR1/CAS, and CRK. Within the complex, interacts with SH2D3C (via C-terminus), and CRK. Part of a complex comprised of PTPRA, BCAR1, BCAR3 (via SH2 domain) and SRC; the formation of the complex is dependent on integrin mediated-tyrosine phosphorylation of PTPRA. Interacts with BCAR3 (via Ras-GEF domain); the interaction regulates adhesion-dependent serine phosphorylation. Interacts with SMAD2 and SMAD3. Interacts with NPHP1. Interacts with PTK2B/PYK2. Interacts (via C-terminus) with SH2D3C/CHAT isoform 2 (via C-terminus). Interacts with activated CSPG4. Interacts with BMX, INPPL1/SHIP2 and PEAK1. Part of a collagen stimulated complex involved in cell migration composed of CDC42, CRK, TNK2 and BCAR1/p130cas. Interacts with TNK2 via SH3 domains. Interacts (when tyrosine-phosphorylated) with tensin TNS1; the interaction is increased by phosphorylation of TNS1. PTK2/FAK1 activation mediates phosphorylation at the YDYVHL motif; phosphorylation is most likely catalyzed by SRC family members. SRC-family kinases are recruited to the phosphorylated sites and can phosphorylate other tyrosine residues. Tyrosine phosphorylation is triggered by integrin mediated adhesion of cells to the extracellular matrix. In terms of processing, dephosphorylated by PTPN14 at Tyr-132. Post-translationally, phosphorylated by SRC kinase in a EDN1- and PTK2B-mediated manner; phosphorylation strengthens its interaction with BCAR3 as part of the PTK2B/BCAR1/BCAR3/RAP1 signaling pathway. In terms of tissue distribution, expressed in olfactory sensory neurons (at protein level). Expressed abundantly in the liver, lung, brain, and at lower levels in the heart (at protein level).

The protein resides in the cell junction. Its subcellular location is the focal adhesion. It is found in the cytoplasm. It localises to the cell projection. The protein localises to the axon. In terms of biological role, docking protein which plays a central coordinating role for tyrosine kinase-based signaling related to cell adhesion. Implicated in induction of cell migration and cell branching. Involved in the BCAR3-mediated inhibition of TGFB signaling. The protein is Breast cancer anti-estrogen resistance protein 1 (Bcar1) of Mus musculus (Mouse).